The primary structure comprises 903 residues: Alanine--tRNA ligase (903 aa).

The Zn(2+) site is built by histidine 591, histidine 595, cysteine 695, and histidine 699.

This sequence belongs to the class-II aminoacyl-tRNA synthetase family. Requires Zn(2+) as cofactor.

The protein resides in the cytoplasm. The enzyme catalyses tRNA(Ala) + L-alanine + ATP = L-alanyl-tRNA(Ala) + AMP + diphosphate. Its function is as follows. Catalyzes the attachment of alanine to tRNA(Ala) in a two-step reaction: alanine is first activated by ATP to form Ala-AMP and then transferred to the acceptor end of tRNA(Ala). Also edits incorrectly charged Ser-tRNA(Ala) and Gly-tRNA(Ala) via its editing domain. This is Alanine--tRNA ligase from Methanosphaera stadtmanae (strain ATCC 43021 / DSM 3091 / JCM 11832 / MCB-3).